The primary structure comprises 22 residues: Brain peptide MVPVPVHHMADELLRNGPDTVI (22 aa).

The chain is Brain peptide MVPVPVHHMADELLRNGPDTVI from Apis mellifera (Honeybee).